A 122-amino-acid chain; its full sequence is UPF0231 protein VV1_1657 (122 aa).

This sequence belongs to the UPF0231 family.

In Vibrio vulnificus (strain CMCP6), this protein is UPF0231 protein VV1_1657.